The following is a 582-amino-acid chain: Aspartate--tRNA ligase (582 aa).

Position 174 (E174) interacts with L-aspartate. Residues 198–201 (QITK) are aspartate. R220 contacts L-aspartate. Residues 220–222 (RDE) and Q229 each bind ATP. H443 contacts L-aspartate. An ATP-binding site is contributed by E477. Residue R484 coordinates L-aspartate. Residue 529–532 (GLDR) coordinates ATP.

This sequence belongs to the class-II aminoacyl-tRNA synthetase family. Type 1 subfamily. Homodimer.

The protein localises to the cytoplasm. It catalyses the reaction tRNA(Asp) + L-aspartate + ATP = L-aspartyl-tRNA(Asp) + AMP + diphosphate. In terms of biological role, catalyzes the attachment of L-aspartate to tRNA(Asp) in a two-step reaction: L-aspartate is first activated by ATP to form Asp-AMP and then transferred to the acceptor end of tRNA(Asp). The polypeptide is Aspartate--tRNA ligase (Streptococcus pyogenes serotype M1).